A 982-amino-acid chain; its full sequence is MAPAVLQKPGVIKDPSIAALFSNKDPEQRYQDLREIGHGSFGAVYFAYDKKNEQTVAIKKMNFSGKQAVEKWNDILKEVSFLNTVVHPHIVDYKACFLKDTTCWLVMEYCIGSAADIVDVLRKGMREVEIAAICSQTLDALRYLHSLKRIHRDIKAGNILLSDHAIVKLADFGSASLVDPAQTFIGTPFFMAPEVILAMDEGHYTDRADIWSLGITCIELAERRPPLFSMNAMSALYHIAQNDPPTLSPIDTSEQPEWSLEFVQFIDKCLRKPAEERMSAEECFRHPFIQRSRPSDTIQELIQRTKNMVLELDNFQYKKMRKLMYLDETEGKEGSEGNGASDDLDFHGNEANSIGRAGDSASSRSASLTSFRSMQSSGGAGLLVSTNTTGAMDNVHGSSGYGNGSSSTTSSARRRPPIPSQMLSSTSTSGVGTMPSHGSVGASITAIAVNPTPSPSEPIPTSQPTSKSESSSILETAHDDPLDTSIRAPVKDLHMPHRAVKERIATLQNHKFATLRSQRIINQEQEEYTKENNMYEQMSKYKHLRQAHHKELQQFEERCALDREQLRVKMDRELEQLTTTYSKEKMRVRCSQNNELDKRKKDIEDGEKKMKKTKNSQNQQQMKLYSAQQLKEYKYNKEAQKTRLRSLNMPRSTYENAMKEVKADLNRVKDARENDFDEKLRAELEDEIVRYRRQQLSNLHQLEEQLDDEDVNVQERQMDTRHGLLSKQHEMTRDLEIQHLNELHAMKKRHLETQHEAESASQNEYTQRQQDELRKKHAMQSRQQPRDLKIQEAQIRKQYRQVVKTQTRQFKLYLTQMVQVVPKDEQKELTSRLKQDQMQKVALLASQYESQIKKMVQDKTVKLESWQEDEQRVLSEKLEKELEELIAYQKKTRATLEEQIKKERTALEERIGTRRAMLEQKIIEEREQMGEMRRLKKEQIRDRHSQERHRLENHFVRTGSTSRSSGGIAPGVGNSSSIQMAM.

The Protein kinase domain occupies 30–289 (YQDLREIGHG…AEECFRHPFI (260 aa)). Residues 36–44 (IGHGSFGAV) and K59 each bind ATP. Catalysis depends on D153, which acts as the Proton acceptor. 4 disordered regions span residues 331 to 484 (GKEG…PLDT), 592 to 620 (QNNE…QNQQ), 751 to 789 (LETQ…RDLK), and 957 to 982 (RTGS…QMAM). Over residues 353 to 373 (SIGRAGDSASSRSASLTSFRS) the composition is skewed to low complexity. A compositionally biased stretch (polar residues) spans 421 to 431 (QMLSSTSTSGV). Low complexity predominate over residues 459 to 472 (IPTSQPTSKSESSS). A compositionally biased stretch (basic and acidic residues) spans 595–608 (ELDKRKKDIEDGEK). Residues 759–768 (SASQNEYTQR) show a composition bias toward polar residues. Residues 957-967 (RTGSTSRSSGG) are compositionally biased toward low complexity. A compositionally biased stretch (polar residues) spans 973-982 (GNSSSIQMAM).

The protein belongs to the protein kinase superfamily. Ser/Thr protein kinase family. STE20 subfamily. Requires Mg(2+) as cofactor. Expressed in the pharynx, including the pharyngeal muscle of the metacorpus, the isthmus, and the terminal bulb; in the intestine, including the pharyngeointestinal valve between the pharynx and the intestine, a structure near the anus likely to be the anal sphincter and the excretory cell and in several ring neurons.

The protein localises to the cytoplasm. It localises to the cytoskeleton. The protein resides in the cell cortex. The catalysed reaction is L-seryl-[protein] + ATP = O-phospho-L-seryl-[protein] + ADP + H(+). The enzyme catalyses L-threonyl-[protein] + ATP = O-phospho-L-threonyl-[protein] + ADP + H(+). Its function is as follows. Acts as a negative regulator of cortical contractions during early embryonic cell division, possibly by regulating rho-1-dependent actomyosin contractility. Plays a role in polarity establishment in early embryos by regulating the size of the anterior and posterior cortex in the first asymmetric cell division. Might play a role in cell cycle progression. In the germline, involved in the regulation of meiotic progression during oogenesis, possibly by modulating the timing of mpk-1 activation. Plays a role in meiotic recombination events. Involved in pharyngeal pumping. The protein is Serine/threonine-protein kinase SULU (kin-18) of Caenorhabditis elegans.